Reading from the N-terminus, the 491-residue chain is Ketol-acid reductoisomerase (NADP(+)) (491 aa).

One can recognise a KARI N-terminal Rossmann domain in the interval 15-208; sequence AQLGKCRFMG…GGHRAGVLES (194 aa). NADP(+)-binding positions include 45-48, arginine 68, arginine 76, serine 78, and 108-110; these read CGAQ and DKQ. Histidine 132 is a catalytic residue. Glycine 158 is a binding site for NADP(+). KARI C-terminal knotted domains lie at 209–344 and 345–484; these read SFVA…TAPQ and YEGK…MTDM. Mg(2+)-binding residues include aspartate 217, glutamate 221, glutamate 389, and glutamate 393. Serine 414 is a substrate binding site.

It belongs to the ketol-acid reductoisomerase family. It depends on Mg(2+) as a cofactor.

The enzyme catalyses (2R)-2,3-dihydroxy-3-methylbutanoate + NADP(+) = (2S)-2-acetolactate + NADPH + H(+). It catalyses the reaction (2R,3R)-2,3-dihydroxy-3-methylpentanoate + NADP(+) = (S)-2-ethyl-2-hydroxy-3-oxobutanoate + NADPH + H(+). Its pathway is amino-acid biosynthesis; L-isoleucine biosynthesis; L-isoleucine from 2-oxobutanoate: step 2/4. The protein operates within amino-acid biosynthesis; L-valine biosynthesis; L-valine from pyruvate: step 2/4. In terms of biological role, involved in the biosynthesis of branched-chain amino acids (BCAA). Catalyzes an alkyl-migration followed by a ketol-acid reduction of (S)-2-acetolactate (S2AL) to yield (R)-2,3-dihydroxy-isovalerate. In the isomerase reaction, S2AL is rearranged via a Mg-dependent methyl migration to produce 3-hydroxy-3-methyl-2-ketobutyrate (HMKB). In the reductase reaction, this 2-ketoacid undergoes a metal-dependent reduction by NADPH to yield (R)-2,3-dihydroxy-isovalerate. The sequence is that of Ketol-acid reductoisomerase (NADP(+)) from Escherichia coli O8 (strain IAI1).